A 271-amino-acid chain; its full sequence is Formamidopyrimidine-DNA glycosylase (271 aa).

P2 functions as the Schiff-base intermediate with DNA in the catalytic mechanism. The Proton donor role is filled by E3. The Proton donor; for beta-elimination activity role is filled by K57. 3 residues coordinate DNA: H90, R109, and K151. An FPG-type zinc finger spans residues 236 to 270 (HVYGRGGESCTQCGNLLSEIKLGQRATVFCGLCQT). R260 (proton donor; for delta-elimination activity) is an active-site residue.

Belongs to the FPG family. In terms of assembly, monomer. Zn(2+) serves as cofactor.

The catalysed reaction is Hydrolysis of DNA containing ring-opened 7-methylguanine residues, releasing 2,6-diamino-4-hydroxy-5-(N-methyl)formamidopyrimidine.. It catalyses the reaction 2'-deoxyribonucleotide-(2'-deoxyribose 5'-phosphate)-2'-deoxyribonucleotide-DNA = a 3'-end 2'-deoxyribonucleotide-(2,3-dehydro-2,3-deoxyribose 5'-phosphate)-DNA + a 5'-end 5'-phospho-2'-deoxyribonucleoside-DNA + H(+). In terms of biological role, involved in base excision repair of DNA damaged by oxidation or by mutagenic agents. Acts as a DNA glycosylase that recognizes and removes damaged bases. Has a preference for oxidized purines, such as 7,8-dihydro-8-oxoguanine (8-oxoG). Has AP (apurinic/apyrimidinic) lyase activity and introduces nicks in the DNA strand. Cleaves the DNA backbone by beta-delta elimination to generate a single-strand break at the site of the removed base with both 3'- and 5'-phosphates. This Shewanella woodyi (strain ATCC 51908 / MS32) protein is Formamidopyrimidine-DNA glycosylase.